The sequence spans 193 residues: Protein SPEAR3 (193 aa).

Disordered stretches follow at residues 1–50 (MGSS…GVAQ) and 85–104 (GYPS…SSPP). Low complexity predominate over residues 14–26 (SSSSSPTSSSSSP). Residues 44-52 (RGLGVAQLE) carry the SPL motif. Residues 86-101 (YPSIPSSSPSFSYASS) show a composition bias toward low complexity. Positions 187–193 (LDLELRL) match the EAR motif.

As to quaternary structure, interacts with TPL and the TPR corepressors TPR1, TPR2, TPR3, TPR4, and with the TCP transcription factors TCP2, TCP3, TCP4, TCP5, TCP10, TCP13, TCP17 and TCP24. Interacts with SPL and SPEAR2. As to expression, expressed in shoot apical meristem, cotyledons and leaves. Detected at the leaf margins and in the vascular bundles at the base of the leaves.

Its subcellular location is the nucleus. Functionally, transcriptional regulator of leaf development. Acts as an adapter-like transcriptional repressor recruiting TPL/TPR corepressors to inhibit the CIN-like TCP transcription factors. The protein is Protein SPEAR3 of Arabidopsis thaliana (Mouse-ear cress).